An 86-amino-acid polypeptide reads, in one-letter code: Cell division topological specificity factor (86 aa).

It belongs to the MinE family.

Its function is as follows. Prevents the cell division inhibition by proteins MinC and MinD at internal division sites while permitting inhibition at polar sites. This ensures cell division at the proper site by restricting the formation of a division septum at the midpoint of the long axis of the cell. This Stenotrophomonas maltophilia (strain R551-3) protein is Cell division topological specificity factor.